The chain runs to 83 residues: ATP synthase subunit c, chloroplastic (83 aa).

The next 2 membrane-spanning stretches (helical) occupy residues 3-23 and 57-77; these read PLIA…AAIG and FAFM…LLFA.

Belongs to the ATPase C chain family. F-type ATPases have 2 components, F(1) - the catalytic core - and F(0) - the membrane proton channel. F(1) has five subunits: alpha(3), beta(3), gamma(1), delta(1), epsilon(1). F(0) has four main subunits: a(1), b(1), b'(1) and c(10-14). The alpha and beta chains form an alternating ring which encloses part of the gamma chain. F(1) is attached to F(0) by a central stalk formed by the gamma and epsilon chains, while a peripheral stalk is formed by the delta, b and b' chains.

The protein localises to the plastid. The protein resides in the chloroplast thylakoid membrane. Its function is as follows. F(1)F(0) ATP synthase produces ATP from ADP in the presence of a proton or sodium gradient. F-type ATPases consist of two structural domains, F(1) containing the extramembraneous catalytic core and F(0) containing the membrane proton channel, linked together by a central stalk and a peripheral stalk. During catalysis, ATP synthesis in the catalytic domain of F(1) is coupled via a rotary mechanism of the central stalk subunits to proton translocation. Functionally, key component of the F(0) channel; it plays a direct role in translocation across the membrane. A homomeric c-ring of between 10-14 subunits forms the central stalk rotor element with the F(1) delta and epsilon subunits. This Oedogonium cardiacum (Filamentous green alga) protein is ATP synthase subunit c, chloroplastic.